A 493-amino-acid chain; its full sequence is Amino acid permease 2 (493 aa).

The Cytoplasmic segment spans residues 1–49 (MGETAAANNHRHHHHHGHQVFDVASHDFVPPQPAFKCFDDDGRLKRTGT). Transmembrane regions (helical) follow at residues 50–70 (VWTA…LSLA) and 71–91 (WAIA…FSLV). The Cytoplasmic portion of the chain corresponds to 92–138 (TLYSSTLLSDCYRTGDAVSGKRNYTYMDAVRSILGGFKFKICGLIQY). A helical transmembrane segment spans residues 139–159 (LNLFGIAIGYTIAASISMMAI). The Extracellular segment spans residues 160 to 175 (KRSNCFHKSGGKDPCH). The chain crosses the membrane as a helical span at residues 176-196 (MSSNPYMIVFGVAEILLSQVP). At 197 to 200 (DFDQ) the chain is on the cytoplasmic side. The helical transmembrane segment at 201 to 221 (IWWISIVAAVMSFTYSAIGLA) threads the bilayer. Residues 222-253 (LGIVQVAANGVFKGSLTGISIGTVTQTQKIWR) are Extracellular-facing. A helical transmembrane segment spans residues 254–274 (TFQALGDIAFAYSYSVVLIEI). Topologically, residues 275–293 (QDTVRSPPAESKTMKKATK) are cytoplasmic. Residues 294-314 (ISIAVTTIFYMLCGSMGYAAF) form a helical membrane-spanning segment. Residues 315–340 (GDAAPGNLLTGFGFYNPFWLLDIANA) are Extracellular-facing. The chain crosses the membrane as a helical span at residues 341 to 361 (AIVVHLVGAYQVFAQPIFAFI). At 362-396 (EKSVAERYPDNDFLSKEFEIRIPGFKSPYKVNVFR) the chain is on the cytoplasmic side. The chain crosses the membrane as a helical span at residues 397–417 (MVYRSGFVVTTTVISMLMPFF). Residues 418–419 (ND) lie on the Extracellular side of the membrane. Residues 420–440 (VVGILGALGFWPLTVYFPVEM) form a helical membrane-spanning segment. Topologically, residues 441–458 (YIKQRKVEKWSTRWVCLQ) are cytoplasmic. A helical membrane pass occupies residues 459–479 (MLSVACLVISVVAGVGSIAGV). The Extracellular portion of the chain corresponds to 480 to 493 (MLDLKVYKPFKSTY).

It belongs to the amino acid/polyamine transporter 2 family. Amino acid/auxin permease (AAAP) (TC 2.A.18.2) subfamily. Highly expressed in developing pods. Found in the vascular strands of siliques, cotyledons, leaves and roots, in the inner phloem of stems, and in the funiculi. Lower levels of expression in flowers. Not expressed in seeds.

It is found in the cell membrane. Inhibited by diethylpyrocarbonate (DEPC). Functionally, amino acid-proton symporter. Stereospecific transporter with a broad specificity for histidine, arginine, glutamate and neutral amino acids, favoring small amino acids such as alanine, asparagine and glutamine. Also accepts large aromatic residues such as phenlalanine or tyrosine. Has a much higher affinity for basic amino acids as compared with AAP1. May function in xylem-to-phloem transfer and in uptake of amino acids assimilated in the green silique tissue. This is Amino acid permease 2 (AAP2) from Arabidopsis thaliana (Mouse-ear cress).